The chain runs to 336 residues: Foldase protein PrsA (336 aa).

Residues 1–22 (MKSAKKLLSVLCLGIFILTFTA) form the signal peptide. Residue C23 is the site of N-palmitoyl cysteine attachment. C23 carries S-diacylglycerol cysteine lipidation. The PpiC domain maps to 194–286 (PNTMNVSHIL…WGYHIIKVNS (93 aa)).

The protein belongs to the PrsA family.

It localises to the cell membrane. The catalysed reaction is [protein]-peptidylproline (omega=180) = [protein]-peptidylproline (omega=0). Plays a major role in protein secretion by helping the post-translocational extracellular folding of several secreted proteins. This Clostridium botulinum (strain ATCC 19397 / Type A) protein is Foldase protein PrsA.